Here is a 299-residue protein sequence, read N- to C-terminus: Probable endonuclease 4 (299 aa).

His-68, His-110, Glu-145, Asp-179, His-182, His-214, Asp-227, His-229, and Glu-259 together coordinate Zn(2+).

This sequence belongs to the AP endonuclease 2 family. It depends on Zn(2+) as a cofactor.

The enzyme catalyses Endonucleolytic cleavage to 5'-phosphooligonucleotide end-products.. In terms of biological role, endonuclease IV plays a role in DNA repair. It cleaves phosphodiester bonds at apurinic or apyrimidinic (AP) sites, generating a 3'-hydroxyl group and a 5'-terminal sugar phosphate. In Exiguobacterium sibiricum (strain DSM 17290 / CCUG 55495 / CIP 109462 / JCM 13490 / 255-15), this protein is Probable endonuclease 4.